We begin with the raw amino-acid sequence, 499 residues long: Maturase K (499 aa).

This sequence belongs to the intron maturase 2 family. MatK subfamily.

The protein localises to the plastid. The protein resides in the chloroplast. In terms of biological role, usually encoded in the trnK tRNA gene intron. Probably assists in splicing its own and other chloroplast group II introns. The sequence is that of Maturase K from Neltuma juliflora (Mesquite).